A 363-amino-acid chain; its full sequence is Transcription factor IIIA (363 aa).

9 consecutive C2H2-type zinc fingers follow at residues 38–62 (FICS…LCKH), 68–92 (FVCD…ILIH), 98–123 (FVCA…ERKH), 130–154 (YVCN…QCQH), 160–184 (FRCT…GKVH), 187–211 (YLCQ…REAH), 215–237 (VTCT…MKTH), 244–269 (YRCP…LSFH), and 275–299 (FVCE…SVVH). The segment at 301 to 363 (PDKKRMKLKV…LAPAALLTVH (63 aa)) is disordered. Residues 338-350 (SLPNSTESSSSPE) are compositionally biased toward low complexity.

It is found in the nucleus. Functionally, involved in ribosomal large subunit biogenesis. Binds the approximately 50 base pairs internal control region (ICR) of 5S ribosomal RNA genes. It is required for their RNA polymerase III-dependent transcription and may also maintain the transcription of other genes. Also binds the transcribed 5S RNA's. This chain is Transcription factor IIIA (Gtf3a), found in Rattus norvegicus (Rat).